The chain runs to 247 residues: 2,3-bisphosphoglycerate-dependent phosphoglycerate mutase (247 aa).

Substrate-binding positions include 8–15 (RHGESQWN), 21–22 (TG), Arg-60, 87–90 (ERHY), Lys-98, 114–115 (RR), and 183–184 (GN). His-9 functions as the Tele-phosphohistidine intermediate in the catalytic mechanism. Glu-87 serves as the catalytic Proton donor/acceptor.

The protein belongs to the phosphoglycerate mutase family. BPG-dependent PGAM subfamily.

The enzyme catalyses (2R)-2-phosphoglycerate = (2R)-3-phosphoglycerate. The protein operates within carbohydrate degradation; glycolysis; pyruvate from D-glyceraldehyde 3-phosphate: step 3/5. Functionally, catalyzes the interconversion of 2-phosphoglycerate and 3-phosphoglycerate. In Chlorobium chlorochromatii (strain CaD3), this protein is 2,3-bisphosphoglycerate-dependent phosphoglycerate mutase.